The primary structure comprises 314 residues: Ribose-phosphate pyrophosphokinase (314 aa).

ATP-binding positions include 37-39 and 96-97; these read DGE and RQ. Mg(2+) is bound by residues His131 and Asp170. Residue Lys194 is part of the active site. D-ribose 5-phosphate-binding positions include Arg196, Asp220, and 224-228; that span reads DTGGT.

Belongs to the ribose-phosphate pyrophosphokinase family. Class I subfamily. Homohexamer. The cofactor is Mg(2+).

It is found in the cytoplasm. It catalyses the reaction D-ribose 5-phosphate + ATP = 5-phospho-alpha-D-ribose 1-diphosphate + AMP + H(+). The protein operates within metabolic intermediate biosynthesis; 5-phospho-alpha-D-ribose 1-diphosphate biosynthesis; 5-phospho-alpha-D-ribose 1-diphosphate from D-ribose 5-phosphate (route I): step 1/1. Its function is as follows. Involved in the biosynthesis of the central metabolite phospho-alpha-D-ribosyl-1-pyrophosphate (PRPP) via the transfer of pyrophosphoryl group from ATP to 1-hydroxyl of ribose-5-phosphate (Rib-5-P). This chain is Ribose-phosphate pyrophosphokinase, found in Vibrio vulnificus (strain CMCP6).